The chain runs to 975 residues: Probable outer membrane protein PmpA (975 aa).

The N-terminal stretch at 1–51 (MNRVIEIHAHYDQRQLSQSPNTNFLVHHPYLTLIPKFLLGALIVYAPYSFA) is a signal peptide. One can recognise an Autotransporter domain in the interval 699 to 975 (RSLIPTSYFG…SLSCGGYVGF (277 aa)).

This sequence belongs to the PMP outer membrane protein family.

Its subcellular location is the secreted. It is found in the cell wall. The protein resides in the cell outer membrane. This chain is Probable outer membrane protein PmpA (pmpA), found in Chlamydia trachomatis serovar D (strain ATCC VR-885 / DSM 19411 / UW-3/Cx).